The sequence spans 592 residues: Methionine--tRNA ligase (592 aa).

Residues 12 to 22 (PYANGPFHVGH) carry the 'HIGH' region motif. Zn(2+) is bound by residues Cys144, Cys147, Cys157, and Cys160. Residues 342-346 (KMSTS) carry the 'KMSKS' region motif. Thr345 provides a ligand contact to ATP.

This sequence belongs to the class-I aminoacyl-tRNA synthetase family. MetG type 1 subfamily. In terms of assembly, monomer. Zn(2+) is required as a cofactor.

The protein resides in the cytoplasm. It carries out the reaction tRNA(Met) + L-methionine + ATP = L-methionyl-tRNA(Met) + AMP + diphosphate. In terms of biological role, is required not only for elongation of protein synthesis but also for the initiation of all mRNA translation through initiator tRNA(fMet) aminoacylation. In Roseiflexus castenholzii (strain DSM 13941 / HLO8), this protein is Methionine--tRNA ligase.